The chain runs to 174 residues: Translation initiation factor IF-3 (174 aa).

This sequence belongs to the IF-3 family. As to quaternary structure, monomer.

Its subcellular location is the cytoplasm. IF-3 binds to the 30S ribosomal subunit and shifts the equilibrium between 70S ribosomes and their 50S and 30S subunits in favor of the free subunits, thus enhancing the availability of 30S subunits on which protein synthesis initiation begins. This Azorhizobium caulinodans (strain ATCC 43989 / DSM 5975 / JCM 20966 / LMG 6465 / NBRC 14845 / NCIMB 13405 / ORS 571) protein is Translation initiation factor IF-3.